An 808-amino-acid chain; its full sequence is Protein NLP5 (808 aa).

Residues 56 to 68 (PTQDTSNSLSQMY) show a composition bias toward polar residues. Residues 56 to 83 (PTQDTSNSLSQMYGQDCPERSSLEDQNQ) are disordered. The 82-residue stretch at 536 to 617 (NRVTEKKRTK…IDSVEGVSGH (82 aa)) folds into the RWP-RK domain. The segment at 660-680 (SPGSSCSHSSSCSSETQVIKE) is disordered. Residues 663–673 (SSCSHSSSCSS) show a composition bias toward low complexity. A PB1 domain is found at 710 to 793 (FLRVKVSYEE…QTIKLLLQLS (84 aa)).

It localises to the nucleus. Functionally, probable transcription factor. The polypeptide is Protein NLP5 (NLP5) (Arabidopsis thaliana (Mouse-ear cress)).